Consider the following 171-residue polypeptide: LIM domain transcription factor LMO4-B (171 aa).

The span at Met-1 to Ser-19 shows a compositional bias: polar residues. A disordered region spans residues Met-1–Pro-20. 2 consecutive LIM zinc-binding domains span residues Lys-22 to Asn-84 and Gly-86 to Asn-148.

In terms of biological role, acts as a positive cofactor of GATA transcription factors to establish the identity of the ventral mesoderm during gastrulation. Down-regulation in the dorsal mesoderm is necessary for the proper formation of this territory since, when present, lmo4 may bind ldb1 and restrict the availability of this cofactor for Spemman organizer transcription factors. At neurula stages, suppresses primary neuron differentiation and modulates gene expression at the Isthmic Organizer of the midbrain-hindbrain boundary. The polypeptide is LIM domain transcription factor LMO4-B (lmo4-b) (Xenopus laevis (African clawed frog)).